The sequence spans 297 residues: Chelated iron transport system membrane protein YfeD (297 aa).

The next 8 membrane-spanning stretches (helical) occupy residues 20–40, 58–78, 96–116, 133–153, 172–192, 197–217, 224–244, and 248–268; these read AIVA…YLVL, IVLA…SGIF, TVMG…FSRI, ISLT…LVVL, IGLP…LTIV, AVGV…AFMI, MLVV…LISF, and GATG…ALIY.

It belongs to the ABC-3 integral membrane protein family.

Its subcellular location is the cell inner membrane. Functionally, part of an ATP-driven transport system YfeABCD for chelated iron. This is Chelated iron transport system membrane protein YfeD (yfeD) from Yersinia pestis.